Consider the following 204-residue polypeptide: MEAQAQGLLETEPLQGRDGDAVGSADFSSMLSEEEKEELKAELIQLEDEITTLRQVLSAKERHLVEIKQKLGMNLMNELKQNFSRSWHDMQTTTAYKKTHETLSHAGQKATAAFNNVGTAISKKFGDMRYSIRHSISMPAMRNSSTFKSFEERVETTVASLKTKVGGTNHGGGSFEEVLNSTAHASSQNASAGSRQTKDEELQC.

Positions 1–31 (MEAQAQGLLETEPLQGRDGDAVGSADFSSML) are disordered. Residues 22–73 (VGSADFSSMLSEEEKEELKAELIQLEDEITTLRQVLSAKERHLVEIKQKLGM) adopt a coiled-coil conformation. A phosphoserine mark is found at S29, S86, S122, and S131. At R133 the chain carries Omega-N-methylarginine. At T146 the chain carries Phosphothreonine. Residues S149 and S174 each carry the phosphoserine modification. The disordered stretch occupies residues 164-204 (KVGGTNHGGGSFEEVLNSTAHASSQNASAGSRQTKDEELQC). Polar residues predominate over residues 179-195 (LNSTAHASSQNASAGSR).

The protein belongs to the TPD52 family. In terms of assembly, forms a homodimer or heterodimer with other members of the family.

In Mus musculus (Mouse), this protein is Tumor protein D53 (Tpd52l1).